A 1176-amino-acid polypeptide reads, in one-letter code: Nitrite reductase [NAD(P)H] (1176 aa).

The interval 1 to 23 (MANTSLDMASSTSPSPSPESTTT) is disordered. A compositionally biased stretch (low complexity) spans 10–23 (SSTSPSPSPESTTT). 26-60 (KRIVVVGLGMVGIAFIEKLIKLDTQRQYEIVVIGE) is a binding site for FAD. Position 183–215 (183–215 (STGVVVGGGLLGLEAAKALMDLQVFGRVVVIER)) interacts with NAD(+). 4 residues coordinate [2Fe-2S] cluster: C496, C498, C531, and C534. Residues C717, C723, C757, and C761 each contribute to the [4Fe-4S] cluster site. C761 is a binding site for siroheme. The 153-residue stretch at 942–1094 (SYFQGADDLP…VEERDDGMVY (153 aa)) folds into the Rieske; atypical domain. The [2Fe-2S] cluster site is built by C981 and H983. Composition is skewed to low complexity over residues 998-1008 (PSPSSCSSSAL) and 1030-1049 (PTSS…TNPS). Positions 998–1051 (PSPSSCSSSALPPSPPSTPPRSSSPVTSPPQSPTSSATPATTASSSCTTNPSGP) are disordered. The [2Fe-2S] cluster site is built by C1058 and H1061. Residues 1124–1139 (LRELDELNKSKGVEGK) show a composition bias toward basic and acidic residues. A disordered region spans residues 1124 to 1157 (LRELDELNKSKGVEGKKGRRGRKPGASEAGKEVG).

This sequence belongs to the nitrite and sulfite reductase 4Fe-4S domain family. Homodimer. Requires siroheme as cofactor. [4Fe-4S] cluster serves as cofactor. It depends on FAD as a cofactor. [2Fe-2S] cluster is required as a cofactor.

It catalyses the reaction NH4(+) + 3 NADP(+) + 2 H2O = nitrite + 3 NADPH + 5 H(+). The enzyme catalyses NH4(+) + 3 NAD(+) + 2 H2O = nitrite + 3 NADH + 5 H(+). Its pathway is nitrogen metabolism; nitrate reduction (assimilation). This chain is Nitrite reductase [NAD(P)H] (nit-6), found in Neurospora crassa (strain ATCC 24698 / 74-OR23-1A / CBS 708.71 / DSM 1257 / FGSC 987).